The primary structure comprises 246 residues: Bacteriorhodopsin-II-like protein (246 aa).

A run of 7 helical transmembrane segments spans residues 7 to 27 (EATW…YFAV), 45 to 65 (TLIP…LGVI), 82 to 102 (YADW…VAGA), 107 to 127 (LYKL…GSMM), 135 to 155 (IVWW…LLGE), 182 to 202 (WALY…IIAV), and 205 to 225 (EIML…AVLL). K217 bears the N6-(retinylidene)lysine mark.

The protein belongs to the archaeal/bacterial/fungal opsin family. In terms of processing, the covalent binding of retinal to the apoprotein, bacterioopsin, generates bacteriorhodopsin.

Its subcellular location is the cell membrane. Has no proton-pumping activity but is potentially capable of functioning as a sensory SRII-like protein. The chromophore contains 36.5% all-trans-, 7.6% 11-cis- and 56.4% 13-cis-retinal in the dark and 30.1% 11-cis- and 47.7% 13-cis-retinal upon illumination with &gt;460 nm light. The sequence is that of Bacteriorhodopsin-II-like protein (bop2) from Haloquadratum walsbyi (strain DSM 16790 / HBSQ001).